An 86-amino-acid chain; its full sequence is Omega-theraphotoxin-Hhn1f 3 (86 aa).

The first 21 residues, 1–21, serve as a signal peptide directing secretion; that stretch reads MKSIVFVALFGLALLAVACSA. A propeptide spanning residues 22–50 is cleaved from the precursor; that stretch reads SEDAHKELLKEVVRAMVVDKTDAVQAEER. Intrachain disulfides connect Cys52–Cys66, Cys59–Cys71, and Cys65–Cys78.

This sequence belongs to the neurotoxin 10 (Hwtx-1) family. 17 (Hntx-9) subfamily. In terms of tissue distribution, expressed by the venom gland.

Its subcellular location is the secreted. Functionally, ion channel inhibitor. The polypeptide is Omega-theraphotoxin-Hhn1f 3 (Cyriopagopus hainanus (Chinese bird spider)).